We begin with the raw amino-acid sequence, 194 residues long: Protein GrpE (194 aa).

Positions 1–39 are disordered; the sequence is MTNHEQDQQDNSELLDDDQVTLESQQAADSGAEAPASDD. Positions 8–20 are enriched in acidic residues; the sequence is QQDNSELLDDDQV.

This sequence belongs to the GrpE family. Homodimer.

The protein resides in the cytoplasm. Its function is as follows. Participates actively in the response to hyperosmotic and heat shock by preventing the aggregation of stress-denatured proteins, in association with DnaK and GrpE. It is the nucleotide exchange factor for DnaK and may function as a thermosensor. Unfolded proteins bind initially to DnaJ; upon interaction with the DnaJ-bound protein, DnaK hydrolyzes its bound ATP, resulting in the formation of a stable complex. GrpE releases ADP from DnaK; ATP binding to DnaK triggers the release of the substrate protein, thus completing the reaction cycle. Several rounds of ATP-dependent interactions between DnaJ, DnaK and GrpE are required for fully efficient folding. This is Protein GrpE from Saccharophagus degradans (strain 2-40 / ATCC 43961 / DSM 17024).